The following is a 61-amino-acid chain: Large ribosomal subunit protein uL30 (61 aa).

The protein belongs to the universal ribosomal protein uL30 family. As to quaternary structure, part of the 50S ribosomal subunit.

The polypeptide is Large ribosomal subunit protein uL30 (Lacticaseibacillus casei (strain BL23) (Lactobacillus casei)).